The chain runs to 79 residues: MKVASIFLLTALVLMSLSGNSGANILGREAKCTNEVNGCPRIYNPVCGTDGVTYSNECLLCMENKERQTPVLIQKSGPC.

The first 23 residues, 1–23 (MKVASIFLLTALVLMSLSGNSGA), serve as a signal peptide directing secretion. One can recognise a Kazal-like domain in the interval 26-79 (LGREAKCTNEVNGCPRIYNPVCGTDGVTYSNECLLCMENKERQTPVLIQKSGPC). Cystine bridges form between Cys-32–Cys-61, Cys-39–Cys-58, and Cys-47–Cys-79.

The protein resides in the secreted. In terms of biological role, serine protease inhibitor which exhibits anti-trypsin activity. In the pancreas, protects against trypsin-catalyzed premature activation of zymogens. Functionally, in the male reproductive tract, binds to sperm heads where it modulates sperm capacitance by inhibiting calcium uptake and nitrogen oxide (NO) production. This is Serine protease inhibitor Kazal-type 1 (SPINK1) from Bos taurus (Bovine).